The chain runs to 179 residues: Putative mediator of RNA polymerase II transcription subunit 28 (179 aa).

Residues 81–119 (SAEKNKIQLKQEIYKVKKEIENKDRLIERYKNKVKEWKY) are a coiled coil.

The protein belongs to the Mediator complex subunit 28 family. In terms of assembly, component of the Mediator complex.

The protein localises to the nucleus. Its function is as follows. Component of the Mediator complex, a coactivator involved in the regulated transcription of nearly all RNA polymerase II-dependent genes. Mediator functions as a bridge to convey information from gene-specific regulatory proteins to the basal RNA polymerase II transcription machinery. Mediator is recruited to promoters by direct interactions with regulatory proteins and serves as a scaffold for the assembly of a functional preinitiation complex with RNA polymerase II and the general transcription factors. This Dictyostelium discoideum (Social amoeba) protein is Putative mediator of RNA polymerase II transcription subunit 28 (med28).